A 245-amino-acid polypeptide reads, in one-letter code: Bis(5'-nucleosyl)-tetraphosphatase PrpE [asymmetrical] (245 aa).

It belongs to the PrpE family. It depends on Ni(2+) as a cofactor.

The catalysed reaction is P(1),P(4)-bis(5'-guanosyl) tetraphosphate + H2O = GMP + GTP + 2 H(+). Functionally, asymmetrically hydrolyzes Ap4p to yield AMP and ATP. The chain is Bis(5'-nucleosyl)-tetraphosphatase PrpE [asymmetrical] from Geobacillus sp. (strain WCH70).